The primary structure comprises 232 residues: Sugar fermentation stimulation protein homolog (232 aa).

Belongs to the SfsA family.

In Brucella anthropi (strain ATCC 49188 / DSM 6882 / CCUG 24695 / JCM 21032 / LMG 3331 / NBRC 15819 / NCTC 12168 / Alc 37) (Ochrobactrum anthropi), this protein is Sugar fermentation stimulation protein homolog.